A 276-amino-acid chain; its full sequence is Undecaprenyl-diphosphatase (276 aa).

7 consecutive transmembrane segments (helical) span residues 48-68 (AANS…AIVF), 92-112 (LSIA…FLFE), 119-139 (LFSV…MLFA), 155-175 (ISYK…WPGF), 196-216 (ADFT…LSLV), 225-245 (DLMP…LFVV), and 255-275 (IKLV…LLIM).

It belongs to the UppP family.

It localises to the cell membrane. The enzyme catalyses di-trans,octa-cis-undecaprenyl diphosphate + H2O = di-trans,octa-cis-undecaprenyl phosphate + phosphate + H(+). Catalyzes the dephosphorylation of undecaprenyl diphosphate (UPP). Confers resistance to bacitracin. In Bacillus subtilis (strain 168), this protein is Undecaprenyl-diphosphatase.